The chain runs to 847 residues: Alpha-glucuronidase A (847 aa).

Positions 1 to 22 are cleaved as a signal peptide; sequence MRSFLLLTALLGVAAVAEDGLA. N-linked (GlcNAc...) asparagine glycans are attached at residues N48, N78, N227, N315, N349, N457, N472, N534, N583, N689, N738, N739, and N769.

It belongs to the glycosyl hydrolase 67 family.

Its subcellular location is the secreted. It catalyses the reaction an alpha-D-glucuronoside + H2O = D-glucuronate + an alcohol. Its function is as follows. Alpha-glucuronidase involved in the hydrolysis of xylan, a major structural heterogeneous polysaccharide found in plant biomass representing the second most abundant polysaccharide in the biosphere, after cellulose. Releases 4-O-methylglucuronic acid from xylan. The sequence is that of Alpha-glucuronidase A (aguA) from Emericella nidulans (strain FGSC A4 / ATCC 38163 / CBS 112.46 / NRRL 194 / M139) (Aspergillus nidulans).